The primary structure comprises 139 residues: Small ribosomal subunit protein uS12 (139 aa).

The disordered stretch occupies residues 1 to 55 (MPTINQLIRKGRKAKVKKSDSPALNKGYNSFKKVQTDLSSPQKRGVCTRVGTMTP). A compositionally biased stretch (polar residues) spans 32–42 (KKVQTDLSSPQ).

Belongs to the universal ribosomal protein uS12 family. Part of the 30S ribosomal subunit. Contacts proteins S8 and S17. May interact with IF1 in the 30S initiation complex.

Functionally, with S4 and S5 plays an important role in translational accuracy. Interacts with and stabilizes bases of the 16S rRNA that are involved in tRNA selection in the A site and with the mRNA backbone. Located at the interface of the 30S and 50S subunits, it traverses the body of the 30S subunit contacting proteins on the other side and probably holding the rRNA structure together. The combined cluster of proteins S8, S12 and S17 appears to hold together the shoulder and platform of the 30S subunit. The sequence is that of Small ribosomal subunit protein uS12 from Halalkalibacterium halodurans (strain ATCC BAA-125 / DSM 18197 / FERM 7344 / JCM 9153 / C-125) (Bacillus halodurans).